A 249-amino-acid polypeptide reads, in one-letter code: tRNA pseudouridine synthase A (249 aa).

Catalysis depends on Asp52, which acts as the Nucleophile. Substrate is bound at residue Tyr110.

This sequence belongs to the tRNA pseudouridine synthase TruA family. As to quaternary structure, homodimer.

The enzyme catalyses uridine(38/39/40) in tRNA = pseudouridine(38/39/40) in tRNA. Formation of pseudouridine at positions 38, 39 and 40 in the anticodon stem and loop of transfer RNAs. In Exiguobacterium sibiricum (strain DSM 17290 / CCUG 55495 / CIP 109462 / JCM 13490 / 255-15), this protein is tRNA pseudouridine synthase A.